Consider the following 128-residue polypeptide: MPKSVIIPAGSSAPLAPFVPGTLADGVVYVSGTLAFDQHNNVLFADDPKAQTRHVLATIRKVIETAGGTMADVTFNSIFITDWKNYAAINEIYAEFFPGDKPARFCIQCGLVKPDALVEIATIAHIAK.

This sequence belongs to the RutC family. As to quaternary structure, homotrimer.

The enzyme catalyses (Z)-3-aminoacrylate + H2O + H(+) = 3-oxopropanoate + NH4(+). Involved in pyrimidine catabolism. Catalyzes the deamination of 3-aminoacrylate to malonic semialdehyde, a reaction that can also occur spontaneously. RutC may facilitate the reaction and modulate the metabolic fitness, rather than catalyzing essential functions. The protein is 3-aminoacrylate deaminase RutC of Escherichia coli (strain SE11).